Reading from the N-terminus, the 130-residue chain is Small ribosomal subunit protein uS8 (130 aa).

It belongs to the universal ribosomal protein uS8 family. In terms of assembly, part of the 30S ribosomal subunit. Contacts proteins S5 and S12.

Functionally, one of the primary rRNA binding proteins, it binds directly to 16S rRNA central domain where it helps coordinate assembly of the platform of the 30S subunit. The chain is Small ribosomal subunit protein uS8 from Aliivibrio fischeri (strain MJ11) (Vibrio fischeri).